Here is a 285-residue protein sequence, read N- to C-terminus: Nucleotide-binding protein Cphy_0331 (285 aa).

Gly8 to Ser15 lines the ATP pocket. Asp59–Ser62 contacts GTP.

Belongs to the RapZ-like family.

Displays ATPase and GTPase activities. In Lachnoclostridium phytofermentans (strain ATCC 700394 / DSM 18823 / ISDg) (Clostridium phytofermentans), this protein is Nucleotide-binding protein Cphy_0331.